The primary structure comprises 362 residues: Chorismate synthase (362 aa).

An NADP(+)-binding site is contributed by arginine 47. FMN contacts are provided by residues 124-126 (RSS), glycine 286, 301-305 (KPTAT), and arginine 327.

It belongs to the chorismate synthase family. In terms of assembly, homotetramer. Requires FMNH2 as cofactor.

It carries out the reaction 5-O-(1-carboxyvinyl)-3-phosphoshikimate = chorismate + phosphate. The protein operates within metabolic intermediate biosynthesis; chorismate biosynthesis; chorismate from D-erythrose 4-phosphate and phosphoenolpyruvate: step 7/7. Functionally, catalyzes the anti-1,4-elimination of the C-3 phosphate and the C-6 proR hydrogen from 5-enolpyruvylshikimate-3-phosphate (EPSP) to yield chorismate, which is the branch point compound that serves as the starting substrate for the three terminal pathways of aromatic amino acid biosynthesis. This reaction introduces a second double bond into the aromatic ring system. The protein is Chorismate synthase of Rippkaea orientalis (strain PCC 8801 / RF-1) (Cyanothece sp. (strain PCC 8801)).